Here is a 33-residue protein sequence, read N- to C-terminus: Beta-theraphotoxin-Cm1a (33 aa).

Cystine bridges form between Cys-2–Cys-17, Cys-9–Cys-22, and Cys-16–Cys-29. Leu-33 bears the Leucine amide mark.

Belongs to the neurotoxin 10 (Hwtx-1) family. 04 (CcoTx1) subfamily. As to expression, expressed by the venom gland.

It localises to the secreted. Functionally, inhibits many voltage-gated sodium channels and one voltage-gated calcium channel (Cav2.2/CACNA1B (IC(50)=400 nM), Nav1.2/SCN2A (IC(50)=3-70 nM), Nav1.1/SCN1A (IC(50)=523-1060 nM), Nav1.7/SCN9A (IC(50)=129.1-5120 nM), Nav1.4/SCN4A (IC(50)=263-888 nM or &gt;10 uM) and Nav1.5/SCN5A (IC(50)=188-323 nM or &gt;10 uM)). It acts by shifting the voltage dependence of channel activation to more depolarized potentials and by blocking the inward component of the sodium current. It shows moderate affinity for lipid bilayers. On Nav1.7/SCN9A, it has been shown to interact with the S3-S4 loop of domain DII (site 4). Is significantly more potent against Nav1.2/SCN2A than the other Nav channel subtypes. In vivo, this toxin causes general ataxia, lack of response to stimuli, and semiparalysis. After a few minutes, the mice are unable to stand, and breathing is reduced in rhythm and intensity. Symptoms gradually increase with progressive slowing of breathing and flaccid paralysis, death occurred within 10 to 20 minutes post injection. Animals remain totally flaccid, and no symptoms of excitatory neurotoxicity are observed. The chain is Beta-theraphotoxin-Cm1a from Ceratogyrus marshalli (Straighthorned baboon tarantula).